We begin with the raw amino-acid sequence, 403 residues long: Probable tRNA sulfurtransferase (403 aa).

In terms of domain architecture, THUMP spans 60-165 (KLAEERLKPI…KEGVFLSCRT (106 aa)). ATP is bound by residues 183-184 (ML), 208-209 (HF), Arg265, Gly287, and Gln296.

It belongs to the ThiI family.

It is found in the cytoplasm. The catalysed reaction is [ThiI sulfur-carrier protein]-S-sulfanyl-L-cysteine + a uridine in tRNA + 2 reduced [2Fe-2S]-[ferredoxin] + ATP + H(+) = [ThiI sulfur-carrier protein]-L-cysteine + a 4-thiouridine in tRNA + 2 oxidized [2Fe-2S]-[ferredoxin] + AMP + diphosphate. It carries out the reaction [ThiS sulfur-carrier protein]-C-terminal Gly-Gly-AMP + S-sulfanyl-L-cysteinyl-[cysteine desulfurase] + AH2 = [ThiS sulfur-carrier protein]-C-terminal-Gly-aminoethanethioate + L-cysteinyl-[cysteine desulfurase] + A + AMP + 2 H(+). It participates in cofactor biosynthesis; thiamine diphosphate biosynthesis. Functionally, catalyzes the ATP-dependent transfer of a sulfur to tRNA to produce 4-thiouridine in position 8 of tRNAs, which functions as a near-UV photosensor. Also catalyzes the transfer of sulfur to the sulfur carrier protein ThiS, forming ThiS-thiocarboxylate. This is a step in the synthesis of thiazole, in the thiamine biosynthesis pathway. The sulfur is donated as persulfide by IscS. The protein is Probable tRNA sulfurtransferase of Listeria welshimeri serovar 6b (strain ATCC 35897 / DSM 20650 / CCUG 15529 / CIP 8149 / NCTC 11857 / SLCC 5334 / V8).